Here is a 370-residue protein sequence, read N- to C-terminus: Aminomethyltransferase (370 aa).

The protein belongs to the GcvT family. The glycine cleavage system is composed of four proteins: P, T, L and H.

The enzyme catalyses N(6)-[(R)-S(8)-aminomethyldihydrolipoyl]-L-lysyl-[protein] + (6S)-5,6,7,8-tetrahydrofolate = N(6)-[(R)-dihydrolipoyl]-L-lysyl-[protein] + (6R)-5,10-methylene-5,6,7,8-tetrahydrofolate + NH4(+). The glycine cleavage system catalyzes the degradation of glycine. The sequence is that of Aminomethyltransferase from Prochlorococcus marinus (strain MIT 9515).